The sequence spans 379 residues: Wnt inhibitory factor 1 (379 aa).

An N-terminal signal peptide occupies residues 1 to 28 (MARRSAFPAAALWLWSILLCLLALRAEA). Residues 38-177 (LWIDAHQARV…PQNAIFFKTC (140 aa)) enclose the WIF domain. Residue Asn-88 is glycosylated (N-linked (GlcNAc...) asparagine). 7 cysteine pairs are disulfide-bonded: Cys-140-Cys-177, Cys-182-Cys-192, Cys-186-Cys-198, Cys-200-Cys-209, Cys-214-Cys-224, Cys-218-Cys-230, and Cys-232-Cys-241. 5 EGF-like domains span residues 178–210 (QQAE…PHCE), 211–242 (KALC…VNCD), 243–271 (KANC…LEGE), 274–306 (EISK…DLCS), and 307–338 (KPVC…RHCN). Residue Asn-245 is glycosylated (N-linked (GlcNAc...) asparagine). Intrachain disulfides connect Cys-246/Cys-256, Cys-250/Cys-262, Cys-278/Cys-288, Cys-282/Cys-294, Cys-296/Cys-305, Cys-310/Cys-320, Cys-314/Cys-326, and Cys-328/Cys-337. The interval 354 to 379 (AQLRQHTPSLKKAEERRDPPESNYIW) is disordered. The segment covering 364 to 373 (KKAEERRDPP) has biased composition (basic and acidic residues).

As to quaternary structure, interacts with MYOC.

The protein localises to the secreted. Functionally, binds to WNT proteins and inhibits their activities. May be involved in mesoderm segmentation. In Homo sapiens (Human), this protein is Wnt inhibitory factor 1 (WIF1).